Here is an 806-residue protein sequence, read N- to C-terminus: Xylosyltransferase sqv-6 (806 aa).

Residues 1 to 11 lie on the Cytoplasmic side of the membrane; that stretch reads MLFNGTTKYRD. A helical; Signal-anchor for type II membrane protein membrane pass occupies residues 12–32; sequence YAIVISLFFLLNVYLLYNTAQ. Residues 33–806 are Lumenal-facing; the sequence is HTQVGNSKHI…GYDEDTQTLI (774 aa). A disulfide bridge links cysteine 57 with cysteine 85. Residues asparagine 89 and asparagine 169 are each glycosylated (N-linked (GlcNAc...) asparagine). 3 cysteine pairs are disulfide-bonded: cysteine 101–cysteine 445, cysteine 464–cysteine 478, and cysteine 466–cysteine 476. In terms of domain architecture, WSC spans 109 to 205; the sequence is IDQRIGCFLD…FNAVEIFRTG (97 aa). UDP-alpha-D-xylose-binding positions include aspartate 264 and 293-295; that span reads TIW. N-linked (GlcNAc...) asparagine glycosylation is present at asparagine 325. UDP-alpha-D-xylose is bound at residue 398 to 399; sequence DW. Residues serine 479 and 505 to 506 contribute to the UDP-alpha-D-xylose site; that span reads RK. N-linked (GlcNAc...) asparagine glycans are attached at residues asparagine 614, asparagine 655, and asparagine 719. A disulfide bridge connects residues cysteine 772 and cysteine 778.

Belongs to the glycosyltransferase 14 family. XylT subfamily. Requires a divalent metal cation as cofactor.

It localises to the endoplasmic reticulum membrane. Its subcellular location is the golgi apparatus membrane. It catalyses the reaction UDP-alpha-D-xylose + L-seryl-[protein] = 3-O-(beta-D-xylosyl)-L-seryl-[protein] + UDP + H(+). Its pathway is glycan metabolism; chondroitin sulfate biosynthesis. The protein operates within glycan metabolism; heparan sulfate biosynthesis. Catalyzes the first step in biosynthesis of glycosaminoglycan. Transfers D-xylose from UDP-D-xylose to specific serine residues of the core protein. Required for vulval morphogenesis and zygotic cytokinesis, suggesting that glycosaminoglycans play a central role in vulval morphogenesis. The sequence is that of Xylosyltransferase sqv-6 from Caenorhabditis elegans.